We begin with the raw amino-acid sequence, 313 residues long: Porphobilinogen deaminase (313 aa).

C241 is modified (S-(dipyrrolylmethanemethyl)cysteine).

This sequence belongs to the HMBS family. In terms of assembly, monomer. Requires dipyrromethane as cofactor.

The catalysed reaction is 4 porphobilinogen + H2O = hydroxymethylbilane + 4 NH4(+). The protein operates within porphyrin-containing compound metabolism; protoporphyrin-IX biosynthesis; coproporphyrinogen-III from 5-aminolevulinate: step 2/4. It functions in the pathway porphyrin-containing compound metabolism; chlorophyll biosynthesis. In terms of biological role, tetrapolymerization of the monopyrrole PBG into the hydroxymethylbilane pre-uroporphyrinogen in several discrete steps. This is Porphobilinogen deaminase from Chlorobium phaeobacteroides (strain BS1).